The following is a 199-amino-acid chain: Adenine phosphoribosyltransferase (199 aa).

The protein belongs to the purine/pyrimidine phosphoribosyltransferase family. Homodimer.

It is found in the cytoplasm. It catalyses the reaction AMP + diphosphate = 5-phospho-alpha-D-ribose 1-diphosphate + adenine. The protein operates within purine metabolism; AMP biosynthesis via salvage pathway; AMP from adenine: step 1/1. Catalyzes a salvage reaction resulting in the formation of AMP, that is energically less costly than de novo synthesis. The chain is Adenine phosphoribosyltransferase from Rhodopseudomonas palustris (strain BisB18).